We begin with the raw amino-acid sequence, 81 residues long: Protein Vpu (81 aa).

The Extracellular portion of the chain corresponds to 1–6; it reads MQPIQI. The helical transmembrane segment at 7–27 threads the bilayer; that stretch reads AIVALVVAIIIAIVVWSIVII. Residues 28–81 are Cytoplasmic-facing; the sequence is EYRKILRQRKIDRLIDRLIERAEDSGNESEGEISALAEMGVEMGHHAPWDVDDL. Phosphoserine; by host CK2 is present on residues Ser-52 and Ser-56.

This sequence belongs to the HIV-1 VPU protein family. As to quaternary structure, homopentamer. Interacts with host CD4 and BRTC; these interactions induce proteasomal degradation of CD4. Interacts with host BST2; this interaction leads to the degradation of host BST2. Interacts with host FBXW11. Interacts with host AP1M1; this interaction plays a role in the mistrafficking and subsequent degradation of host BST2. Interacts with host RANBP2; this interaction allows Vpu to down-regulate host BLM sumoylation. In terms of processing, phosphorylated by host CK2. This phosphorylation is necessary for interaction with human BTRC and degradation of CD4.

Its subcellular location is the host membrane. Ion channel activity is inhibited by hexamethylene amiloride in vitro. Its function is as follows. Enhances virion budding by targeting host CD4 and Tetherin/BST2 to proteasome degradation. Degradation of CD4 prevents any unwanted premature interactions between viral Env and its host receptor CD4 in the endoplasmic reticulum. Degradation of antiretroviral protein Tetherin/BST2 is important for virion budding, as BST2 tethers new viral particles to the host cell membrane. Mechanistically, Vpu bridges either CD4 or BST2 to BTRC, a substrate recognition subunit of the Skp1/Cullin/F-box protein E3 ubiquitin ligase, induces their ubiquitination and subsequent proteasomal degradation. The alteration of the E3 ligase specificity by Vpu seems to promote the degradation of host IKBKB, leading to NF-kappa-B down-regulation and subsequent apoptosis. Acts as a viroporin that forms an oligomeric ion channel in membranes. Modulates the host DNA repair mechanisms to promote degradation of nuclear viral cDNA in cells that are already productively infected in order to suppress immune sensing and proviral hyper-integration (superinfection). Manipulates PML-NBs and modulates SUMOylation of host BLM protein thereby enhancing its DNA-end processing activity toward viral unintegrated linear DNA. Also inhibits RAD52-mediated homologous repair of viral cDNA, preventing the generation of dead-end circular forms of single copies of the long terminal repeat and permitting sustained nucleolytic attack. This chain is Protein Vpu, found in Homo sapiens (Human).